The sequence spans 577 residues: Zinc finger protein 384 (577 aa).

Residues 171 to 225 (TLTEEGGGGGGGGGSVAPKPPRGRKKKRMLESGLPEMNDPYVLSPEDDDDHQKDG) form a disordered region. Over residues 175-185 (EGGGGGGGGGS) the composition is skewed to gly residues. Ser214 is subject to Phosphoserine. 8 consecutive C2H2-type zinc fingers follow at residues 228-250 (YRCR…SKSH), 256-278 (HKCP…IRIH), 284-306 (YSCN…TRIH), 317-339 (HKCP…LRIH), 345-367 (YNCS…TRIH), 373-397 (YKCA…RRQH), 403-425 (FKCH…LSTH), and 433-455 (YTCT…MRKH). Residues 501-515 (QQQQQQQQQQQQQQQ) show a composition bias toward low complexity. The interval 501 to 550 (QQQQQQQQQQQQQQQQPPPHFQSPGAAPQGGGGGDSNPNPPPQCSFDLTP) is disordered.

The protein belongs to the krueppel C2H2-type zinc-finger protein family. As to quaternary structure, interacts with BCAR1.

It localises to the nucleus. Functionally, transcription factor that binds the consensus DNA sequence [GC]AAAAA. Seems to bind and regulate the promoters of MMP1, MMP3, MMP7 and COL1A1. This Homo sapiens (Human) protein is Zinc finger protein 384 (ZNF384).